The following is a 423-amino-acid chain: MSKASTFSAPKGVPDYVPPQSSEFVAVRDGLTRAARLAGYGHIELPIFEDTGLFARGVGESTDVVSKEMYTFADRGDRSVTLRPEGTAGVMRAVIEHGLDRGQLPVKLSYAGPFFRYERPQAGRYRQLQQVGVEAIGVDDPALDAEVIAVADAGFRGLGLEGFRLEITSLGDDTCRPQYRERLQEFLFALPLDEETRRRAEINPLRVLDDKRKEVREMTADAPLMLDHLSDTAKAHFDEVLAHLDALGVPYVVNPRMVRGLDYYTKTTFEFVHDGLGAQSGIGGGGRYDGLMAQLGGQPLSGIGFGLGVDRTVLALAAEGKTAGSTARCEVFGVPLGEEAKAKLVVIAQQLRAQGIRVDLAYGNRGVKGAMKAADRSGAALALVLGDRDIAEGTVGIKNLATGDQESVSSADVLARVGAILGA.

The protein belongs to the class-II aminoacyl-tRNA synthetase family. Homodimer.

Its subcellular location is the cytoplasm. It catalyses the reaction tRNA(His) + L-histidine + ATP = L-histidyl-tRNA(His) + AMP + diphosphate + H(+). The polypeptide is Histidine--tRNA ligase (Rhodococcus opacus (strain B4)).